The following is a 235-amino-acid chain: Sugar fermentation stimulation protein homolog (235 aa).

It belongs to the SfsA family.

In Azotobacter vinelandii (strain DJ / ATCC BAA-1303), this protein is Sugar fermentation stimulation protein homolog.